The primary structure comprises 332 residues: MATSTTMSHQAIGSVVSQRPFKASQFLKEPLNNVPMKFRQKRFKIEATASQISVVDNTFLSPSPSKNKPHESKKKSNEAALILIRHGESLWNEKNLFTGCVDVPLTQKGVGEAIEAGKKISNIPVDLIFTSSLIRAQMTAMLAMTQHRRKKVPIILHNESVKAKTWSHVFSEETRKQSIPVIAAWQLNERMYGELQGLNKKETAERYGTQQVHEWRRSYEIPPPKGESLEMCAERAVAYFEDNIKPELASGNNVMIAAHGNSLRSIIMYLDDLTSQEVTTLDLSTGVPLLYIFKEGKFMKRGSPVGSTEAGVYAYTKRLAQYREKLDAAATI.

The N-terminal 48 residues, 1–48 (MATSTTMSHQAIGSVVSQRPFKASQFLKEPLNNVPMKFRQKRFKIEAT), are a transit peptide targeting the chloroplast. Substrate-binding positions include 85–92 (RHGESLWN), 98–99 (TG), Arg-135, 189–192 (ERMY), Lys-200, 216–217 (RR), and 260–261 (GN). Catalysis depends on His-86, which acts as the Tele-phosphohistidine intermediate. Catalysis depends on Glu-189, which acts as the Proton donor/acceptor.

The protein belongs to the phosphoglycerate mutase family. BPG-dependent PGAM subfamily.

It localises to the plastid. It is found in the chloroplast. It carries out the reaction (2R)-2-phosphoglycerate = (2R)-3-phosphoglycerate. The protein operates within carbohydrate degradation; glycolysis; pyruvate from D-glyceraldehyde 3-phosphate: step 3/5. Functionally, catalyzes the interconversion of 2-phosphoglycerate and 3-phosphoglycerate. The sequence is that of 2,3-bisphosphoglycerate-dependent phosphoglycerate mutase 2 from Arabidopsis thaliana (Mouse-ear cress).